A 369-amino-acid polypeptide reads, in one-letter code: Endophilin-A (369 aa).

In terms of domain architecture, BAR spans 18–248; the sequence is TEKMGGAEGT…LQEKRAEAES (231 aa). The stretch at 227–249 forms a coiled coil; the sequence is QCADVLRGLQETLQEKRAEAESR. A compositionally biased stretch (low complexity) spans 275 to 294; that stretch reads GTPSHISSSASPLPSPMRSP. The interval 275–297 is disordered; it reads GTPSHISSSASPLPSPMRSPAKS. The SH3 domain occupies 305 to 364; sequence QQQPCCQALYDFDPENPGELGFKENDIITLLNRVDDNWYEGAVNGRTGYFPQSYVQVQVP.

It belongs to the endophilin family.

The protein localises to the cytoplasm. Its subcellular location is the membrane. Required presynaptically at the neuromuscular junction. Implicated in synaptic vesicle endocytosis. The polypeptide is Endophilin-A (Drosophila virilis (Fruit fly)).